The following is a 1139-amino-acid chain: Protein kinase C-like (1139 aa).

Residues 1-67 form the REM-1 1 domain; the sequence is MNEDEAIQNI…LRDIQLRKVG (67 aa). A disordered region spans residues 72–132; the sequence is GMSLGADDAG…PGPGAASKAR (61 aa). The REM-1 2 domain maps to 142–219; sequence KYDTPYLGPR…LKRYEELHVD (78 aa). The C2 domain occupies 225–343; that stretch reads AQDDDSINTP…MRRKRIEAEM (119 aa). Residues 349–404 are disordered; the sequence is VSADRMGSTGAPSQFPMSPTSGSFGGSPQAPGGGQGQAPGPFGDPAPQPQVVTGPI. Over residues 358–368 the composition is skewed to polar residues; sequence GAPSQFPMSPT. 2 Phorbol-ester/DAG-type zinc fingers span residues 454-502 and 522-572; these read GHKF…VTKC and PHRF…PDFC. Disordered regions lie at residues 590 to 637, 649 to 668, and 679 to 804; these read KQRQ…TPSA, QTSP…LSAA, and QGRT…TDPG. Residues 594 to 614 show a composition bias toward polar residues; the sequence is QKTTSLSEKTLRSGATKSPTT. Low complexity predominate over residues 615–629; sequence AGHGSSASFSSAGAG. 2 stretches are compositionally biased toward pro residues: residues 723–734 and 743–760; these read AQPPAQQRPPQP and AQMP…PPQP. The span at 761–793 shows a compositional bias: low complexity; the sequence is GQQYQQQQPAAQKPQPQPPATAQGAAAGPPGSQ. In terms of domain architecture, Protein kinase spans 814-1073; it reads FNFLAVLGKG…AQEVMSQPFF (260 aa). ATP is bound by residues 820–828 and K843; that span reads LGKGNFGKV. The active-site Proton acceptor is the D939. Residues 1074-1139 form the AGC-kinase C-terminal domain; the sequence is RNINWDDIYH…RGFSYTADLD (66 aa).

Belongs to the protein kinase superfamily. AGC Ser/Thr protein kinase family. PKC subfamily.

The enzyme catalyses L-seryl-[protein] + ATP = O-phospho-L-seryl-[protein] + ADP + H(+). It catalyses the reaction L-threonyl-[protein] + ATP = O-phospho-L-threonyl-[protein] + ADP + H(+). Stimulated about twofold by phospholipids or phorbol esters. The protein is Protein kinase C-like (pkc1) of Hypocrea jecorina (Trichoderma reesei).